A 107-amino-acid chain; its full sequence is Thioredoxin 1 (107 aa).

The Thioredoxin domain occupies 2–107; that stretch reads SAAAQVTDST…TLSQTLEKHL (106 aa). C32 and C35 are joined by a disulfide.

Belongs to the thioredoxin family.

Its function is as follows. Participates in various redox reactions through the reversible oxidation of its active center dithiol to a disulfide and catalyzes dithiol-disulfide exchange reactions. The sequence is that of Thioredoxin 1 (trxA) from Nostoc sp. (strain PCC 7120 / SAG 25.82 / UTEX 2576).